Consider the following 570-residue polypeptide: Coiled-coil domain-containing protein 22 homolog (570 aa).

Disordered stretches follow at residues 110–129 (RQSEDDANRTSHPLSSREQL) and 234–280 (LTST…PLEL). The span at 248–257 (TSPTQTSTTA) shows a compositional bias: polar residues. Low complexity predominate over residues 265–276 (SSEATATSTTTT). Coiled-coil stretches lie at residues 308–471 (ELKI…LQRQ) and 529–570 (GEKL…ITVG).

The protein belongs to the CCDC22 family.

This Drosophila willistoni (Fruit fly) protein is Coiled-coil domain-containing protein 22 homolog.